The sequence spans 377 residues: CaM kinase-like vesicle-associated protein (377 aa).

The Protein kinase domain maps to 24-287 (YDLGQLIKTE…AADAISHEWI (264 aa)). Positions 324-377 (MKRLRAPEQTDPGTPSPSKDSDKTPSMATPAPSPANTPAEGAPSLPCPSPDTTG) are disordered. Positions 347 to 362 (TPSMATPAPSPANTPA) are enriched in low complexity. Residues 368-377 (LPCPSPDTTG) are compositionally biased toward pro residues.

Belongs to the protein kinase superfamily. CAMK Ser/Thr protein kinase family. As to quaternary structure, interacts with calmodulin, in the presence of calcium. The cofactor is Ca(2+).

It is found in the cytoplasmic vesicle membrane. Functionally, does not appear to have detectable kinase activity. The protein is CaM kinase-like vesicle-associated protein (camkv) of Xenopus laevis (African clawed frog).